A 657-amino-acid polypeptide reads, in one-letter code: tRNA 5-methylaminomethyl-2-thiouridine biosynthesis bifunctional protein MnmC (657 aa).

The segment at methionine 1–alanine 239 is tRNA (mnm(5)s(2)U34)-methyltransferase. The tract at residues isoleucine 263–alanine 657 is FAD-dependent cmnm(5)s(2)U34 oxidoreductase.

In the N-terminal section; belongs to the methyltransferase superfamily. tRNA (mnm(5)s(2)U34)-methyltransferase family. This sequence in the C-terminal section; belongs to the DAO family. Requires FAD as cofactor.

It is found in the cytoplasm. The catalysed reaction is 5-aminomethyl-2-thiouridine(34) in tRNA + S-adenosyl-L-methionine = 5-methylaminomethyl-2-thiouridine(34) in tRNA + S-adenosyl-L-homocysteine + H(+). Catalyzes the last two steps in the biosynthesis of 5-methylaminomethyl-2-thiouridine (mnm(5)s(2)U) at the wobble position (U34) in tRNA. Catalyzes the FAD-dependent demodification of cmnm(5)s(2)U34 to nm(5)s(2)U34, followed by the transfer of a methyl group from S-adenosyl-L-methionine to nm(5)s(2)U34, to form mnm(5)s(2)U34. This is tRNA 5-methylaminomethyl-2-thiouridine biosynthesis bifunctional protein MnmC from Burkholderia pseudomallei (strain 668).